A 418-amino-acid polypeptide reads, in one-letter code: Argininosuccinate synthase (418 aa).

16-24 (AYSGGLDTS) provides a ligand contact to ATP. Residue tyrosine 95 coordinates L-citrulline. Residue glycine 125 participates in ATP binding. Positions 127, 131, and 132 each coordinate L-aspartate. Asparagine 131 serves as a coordination point for L-citrulline. L-citrulline-binding residues include arginine 135, serine 183, glutamate 267, and tyrosine 279.

The protein belongs to the argininosuccinate synthase family. Type 1 subfamily. In terms of assembly, homotetramer.

The protein localises to the cytoplasm. It catalyses the reaction L-citrulline + L-aspartate + ATP = 2-(N(omega)-L-arginino)succinate + AMP + diphosphate + H(+). It functions in the pathway amino-acid biosynthesis; L-arginine biosynthesis; L-arginine from L-ornithine and carbamoyl phosphate: step 2/3. The protein is Argininosuccinate synthase of Bifidobacterium adolescentis (strain ATCC 15703 / DSM 20083 / NCTC 11814 / E194a).